Consider the following 198-residue polypeptide: Recombination protein RecR (198 aa).

The C4-type zinc-finger motif lies at 57–72 (CSICGNLTESDPCAIC). The region spanning 80–175 (TTILVVEESK…KVTRLAHGLA (96 aa)) is the Toprim domain.

Belongs to the RecR family.

Its function is as follows. May play a role in DNA repair. It seems to be involved in an RecBC-independent recombinational process of DNA repair. It may act with RecF and RecO. This chain is Recombination protein RecR, found in Lactococcus lactis subsp. cremoris (strain SK11).